Here is a 251-residue protein sequence, read N- to C-terminus: Probable ATP-dependent transporter ycf16 (251 aa).

Residues 8 to 250 form the ABC transporter domain; the sequence is LEIKNLKACI…ELESKGYEWL (243 aa). 40 to 47 provides a ligand contact to ATP; the sequence is GPNGSGKS.

The protein belongs to the ABC transporter superfamily. Ycf16 family.

It localises to the plastid. Its subcellular location is the chloroplast. This is Probable ATP-dependent transporter ycf16 (ycf16) from Trieres chinensis (Marine centric diatom).